A 353-amino-acid polypeptide reads, in one-letter code: Trans-enoyl reductase RAP2 (353 aa).

46 to 49 lines the NADP(+) pocket; that stretch reads CDHK. 131 to 138 contributes to the substrate binding site; it reads TGLSTIGM. NADP(+)-binding positions include 189-192, Tyr207, and 254-255; these read SPRN and LE. A substrate-binding site is contributed by 274–278; the sequence is GMALL. Residue 343–344 coordinates NADP(+); sequence VS.

This sequence belongs to the zinc-containing alcohol dehydrogenase family. In terms of assembly, monomer.

Its pathway is secondary metabolite biosynthesis. Functionally, trans-enoyl reductase; part of the gene cluster that mediates the biosynthesis of a tyrosine-derived cytochalasan acting as a fungal signal recognized by resistant rice plants and leads to avirulence in Pi33 resistant rice cultivars. The first step in the pathway is catalyzed by the hybrid PKS-NRPS ACE1, assisted by the enoyl reductase RAP1, that are responsible for fusion of the tyrosine precursor and the polyketide backbone. The polyketide synthase module (PKS) of ACE1 is responsible for the synthesis of the polyketide backbone and the downstream nonribosomal peptide synthetase (NRPS) amidates the carboxyl end of the polyketide with the tyrosine precursor. Because ACE1 lacks a designated enoylreductase (ER) domain, the required activity is provided the enoyl reductase RAP1. Reduction by the hydrolyase ORFZ, followed by dehydration and intra-molecular Diels-Alder cyclization by the Diels-Alderase ORF3 then yield the required isoindolone-fused macrocycle. A number of oxidative steps catalyzed by the tailoring enzymes identified within the cluster, including cytochrome P450 monooxygenases CYP1 to CYP4, the FAD-linked oxidoreductase OXR2 and the short-chain dehydrogenase/reductase OXR1, are further required to afford the final cytochalasans that confer avirulence and which have still to be identified. The monooxygenase CYP1 has been shown to be a site-selective C-18 hydroxylase whereas the function of CYP3 is the site-selective epoxidation of the C-6/C-7 olefin that is present in some intermediate compounds. Finally, SYN2 and RAP2 are not required for avirulence in Pi33 resistant rice cultivars. This is Trans-enoyl reductase RAP2 from Pyricularia oryzae (strain 70-15 / ATCC MYA-4617 / FGSC 8958) (Rice blast fungus).